Reading from the N-terminus, the 281-residue chain is Pantothenate synthetase (281 aa).

Residue 30–37 coordinates ATP; the sequence is MGYLHEGH. Catalysis depends on H37, which acts as the Proton donor. Q61 provides a ligand contact to (R)-pantoate. Q61 is a beta-alanine binding site. 147–150 provides a ligand contact to ATP; it reads GEKD. (R)-pantoate is bound at residue Q153. Residues I176 and 184–187 contribute to the ATP site; that span reads KSSR.

The protein belongs to the pantothenate synthetase family. In terms of assembly, homodimer.

The protein resides in the cytoplasm. It catalyses the reaction (R)-pantoate + beta-alanine + ATP = (R)-pantothenate + AMP + diphosphate + H(+). It functions in the pathway cofactor biosynthesis; (R)-pantothenate biosynthesis; (R)-pantothenate from (R)-pantoate and beta-alanine: step 1/1. Its function is as follows. Catalyzes the condensation of pantoate with beta-alanine in an ATP-dependent reaction via a pantoyl-adenylate intermediate. The protein is Pantothenate synthetase of Clostridium botulinum (strain Langeland / NCTC 10281 / Type F).